Reading from the N-terminus, the 218-residue chain is tRNA (guanosine(18)-2'-O)-methyltransferase (218 aa).

The S-adenosyl-L-methionine site is built by Thr111 and Ile154.

It belongs to the class IV-like SAM-binding methyltransferase superfamily. RNA methyltransferase TrmH family.

It carries out the reaction guanosine(18) in tRNA + S-adenosyl-L-methionine = 2'-O-methylguanosine(18) in tRNA + S-adenosyl-L-homocysteine + H(+). In terms of biological role, catalyzes the 2'-O methylation of guanosine at position 18 in tRNA. This chain is tRNA (guanosine(18)-2'-O)-methyltransferase, found in Borreliella burgdorferi (strain ATCC 35210 / DSM 4680 / CIP 102532 / B31) (Borrelia burgdorferi).